Consider the following 477-residue polypeptide: Fibrinogen beta chain (477 aa).

Positions 1–76 (EDLSLVGQPE…ASPRPQEAQK (76 aa)) are disordered. Y13 carries the sulfotyrosine modification. N27 carries N-linked (GlcNAc...) asparagine glycosylation. Residues 44–55 (RVRRPPLRHRRL) show a composition bias toward basic residues. 3 cysteine pairs are disulfide-bonded: C220–C304, C230–C259, and C412–C425. Residues 221-476 (RVPVVSGMHC…QMAMKLRPKW (256 aa)) enclose the Fibrinogen C-terminal domain.

Heterohexamer; disulfide linked. Contains 2 sets of 3 non-identical chains (alpha, beta and gamma). The 2 heterotrimers are in head to head conformation with the N-termini in a small central domain. Conversion of fibrinogen to fibrin is triggered by thrombin, which cleaves fibrinopeptides A and B from alpha and beta chains, and thus exposes the N-terminal polymerization sites responsible for the formation of the soft clot. The soft clot is converted into the hard clot by factor XIIIA which catalyzes the epsilon-(gamma-glutamyl)lysine cross-linking between gamma chains (stronger) and between alpha chains (weaker) of different monomers.

The protein resides in the secreted. Fibrinogen has a double function: yielding monomers that polymerize into fibrin and acting as a cofactor in platelet aggregation. The protein is Fibrinogen beta chain of Petromyzon marinus (Sea lamprey).